The chain runs to 348 residues: Fe-S cluster assembly protein DRE2 (348 aa).

The segment at 1–158 is N-terminal SAM-like domain; it reads MSQYKTGLLL…LPTFKKASSS (158 aa). The interval 137–170 is disordered; that stretch reads KTNNTKLQSGSKLPTFKKASSSTSNLPSFKKADH. The span at 144 to 163 shows a compositional bias: polar residues; it reads QSGSKLPTFKKASSSTSNLP. The segment at 159-242 is linker; sequence TSNLPSFKKA…EEELIDEDGS (84 aa). Residue Ser206 is modified to Phosphoserine. [2Fe-2S] cluster is bound by residues Cys252, Cys263, Cys266, and Cys268. The fe-S binding site A stretch occupies residues 252-268; the sequence is CGKSKTKKKKACKDCTC. 4 residues coordinate [4Fe-4S] cluster: Cys311, Cys314, Cys322, and Cys325. Short sequence motifs (cx2C motif) lie at residues 311-314 and 322-325; these read CGSC and CSGC. The tract at residues 311 to 325 is fe-S binding site B; the sequence is CGSCSLGDAFRCSGC.

It belongs to the anamorsin family. As to quaternary structure, monomer. Interacts with TAH18. Interacts with MIA40. [2Fe-2S] cluster is required as a cofactor. Requires [4Fe-4S] cluster as cofactor. Post-translationally, ubiquitinated.

The protein localises to the cytoplasm. Its subcellular location is the mitochondrion intermembrane space. In terms of biological role, component of the cytosolic iron-sulfur (Fe-S) protein assembly (CIA) machinery required for the maturation of extramitochondrial Fe-S proteins. Part of an electron transfer chain functioning in an early step of cytosolic Fe-S biogenesis, facilitating the de novo assembly of a [4Fe-4S] cluster on the scaffold complex CFD1-NBP35. Electrons are transferred to DRE2 from NADPH via the FAD- and FMN-containing protein TAH18. TAH18-DRE2 are also required for the assembly of the diferric tyrosyl radical cofactor of ribonucleotide reductase (RNR), probably by providing electrons for reduction during radical cofactor maturation in the catalytic small subunit RNR2. Has anti-apoptotic effects in the cell. Involved in negative control of H(2)O(2)-induced cell death. The protein is Fe-S cluster assembly protein DRE2 of Saccharomyces cerevisiae (strain ATCC 204508 / S288c) (Baker's yeast).